We begin with the raw amino-acid sequence, 242 residues long: Uroporphyrinogen-III C-methyltransferase (242 aa).

S-adenosyl-L-homocysteine contacts are provided by residues Pro-12, 88–90, 118–119, and Met-170; these read GGD and TS.

Belongs to the precorrin methyltransferase family. As to quaternary structure, homodimer.

The catalysed reaction is uroporphyrinogen III + 2 S-adenosyl-L-methionine = precorrin-2 + 2 S-adenosyl-L-homocysteine + H(+). It participates in cofactor biosynthesis; adenosylcobalamin biosynthesis; precorrin-2 from uroporphyrinogen III: step 1/1. Its function is as follows. Catalyzes the two successive C-2 and C-7 methylation reactions involved in the conversion of uroporphyrinogen III to precorrin-2 via the intermediate formation of precorrin-1. It is a step in the biosynthesis of both cobalamin (vitamin B12) and coenzyme F430. The sequence is that of Uroporphyrinogen-III C-methyltransferase (cobA) from Methanocaldococcus jannaschii (strain ATCC 43067 / DSM 2661 / JAL-1 / JCM 10045 / NBRC 100440) (Methanococcus jannaschii).